Here is a 374-residue protein sequence, read N- to C-terminus: Probable plastid-lipid-associated protein 3, chloroplastic (374 aa).

Residues 1–46 (MAMPPPLFAAASHASLLLPSPTIHSSTGSRRPFRLPLRSSRRPPVA) constitute a chloroplast transit peptide. The disordered stretch occupies residues 19–148 (PSPTIHSSTG…EDNEEERREE (130 aa)). A compositionally biased stretch (low complexity) spans 28-54 (GSRRPFRLPLRSSRRPPVAAAAASGVP). 2 stretches are compositionally biased toward pro residues: residues 64-73 (APEPPSQPDP) and 127-136 (PAPPPPPPPV).

This sequence belongs to the PAP/fibrillin family.

It localises to the plastid. The protein localises to the chloroplast. This Oryza sativa subsp. japonica (Rice) protein is Probable plastid-lipid-associated protein 3, chloroplastic (PAP3).